Reading from the N-terminus, the 283-residue chain is tRNA pseudouridine synthase B (283 aa).

Asp-38 acts as the Nucleophile in catalysis.

It belongs to the pseudouridine synthase TruB family. Type 1 subfamily.

It carries out the reaction uridine(55) in tRNA = pseudouridine(55) in tRNA. In terms of biological role, responsible for synthesis of pseudouridine from uracil-55 in the psi GC loop of transfer RNAs. In Aster yellows witches'-broom phytoplasma (strain AYWB), this protein is tRNA pseudouridine synthase B.